A 120-amino-acid polypeptide reads, in one-letter code: Piercer of microtubule wall 2 protein (120 aa).

The span at 1–10 (MTECDWEKKS) shows a compositional bias: basic and acidic residues. A disordered region spans residues 1–25 (MTECDWEKKSTSASNSDTEMKPELP).

This sequence belongs to the PIERCE2 family. As to quaternary structure, microtubule inner protein component of sperm flagellar doublet microtubules. Interacts with CFAP53, ODAD1 and ODAD3; the interactions link the outer dynein arms docking complex (ODA-DC) to the internal microtubule inner proteins (MIP) in cilium axoneme. In terms of tissue distribution, expressed in trachea multiciliated cells.

Its subcellular location is the cytoplasm. It is found in the cytoskeleton. It localises to the cilium axoneme. The protein resides in the flagellum axoneme. In terms of biological role, microtubule inner protein involved in the attachment of outer dynein arms (ODAs) to dynein-decorated doublet microtubules (DMTs) in cilia axoneme, which is required for motile cilia beating. The sequence is that of Piercer of microtubule wall 2 protein (PIERCE2) from Bos taurus (Bovine).